A 177-amino-acid chain; its full sequence is B-phycoerythrin beta chain (177 aa).

(2R,3E)-phycoerythrobilin is bound by residues Lys28, Asn35, Asp39, Cys50, Asp54, Cys61, Asn72, Arg77 to Arg78, Cys82, Arg129, Ser147 to Gln148, Pro154 to Cys158, and Cys158. The residue at position 72 (Asn72) is an N4-methylasparagine.

Belongs to the phycobiliprotein family. As to quaternary structure, heterotetramer of 2 different alpha chains and 2 identical beta chains. The subunit composition could comprise any combination of 2 out of 4 different alpha units with an invariant beta unit. In terms of processing, contains three covalently linked phycoerythrobilin chromophores.

It is found in the plastid. The protein localises to the chloroplast thylakoid membrane. In terms of biological role, light-harvesting photosynthetic tetrapyrrole chromophore-protein from the phycobiliprotein complex. This chain is B-phycoerythrin beta chain (cpeB), found in Rhodomonas sp. (strain CS 24) (Chroomonas sp. (strain CS24)).